A 246-amino-acid chain; its full sequence is UDP-2,3-diacylglucosamine hydrolase (246 aa).

Mn(2+)-binding residues include aspartate 8, histidine 10, aspartate 41, asparagine 79, and histidine 114. 79 to 80 (NR) lines the substrate pocket. Positions 122, 160, 164, 167, and 195 each coordinate substrate. 2 residues coordinate Mn(2+): histidine 195 and histidine 197.

The protein belongs to the LpxH family. Mn(2+) serves as cofactor.

The protein resides in the cell inner membrane. The catalysed reaction is UDP-2-N,3-O-bis[(3R)-3-hydroxytetradecanoyl]-alpha-D-glucosamine + H2O = 2-N,3-O-bis[(3R)-3-hydroxytetradecanoyl]-alpha-D-glucosaminyl 1-phosphate + UMP + 2 H(+). It functions in the pathway glycolipid biosynthesis; lipid IV(A) biosynthesis; lipid IV(A) from (3R)-3-hydroxytetradecanoyl-[acyl-carrier-protein] and UDP-N-acetyl-alpha-D-glucosamine: step 4/6. In terms of biological role, hydrolyzes the pyrophosphate bond of UDP-2,3-diacylglucosamine to yield 2,3-diacylglucosamine 1-phosphate (lipid X) and UMP by catalyzing the attack of water at the alpha-P atom. Involved in the biosynthesis of lipid A, a phosphorylated glycolipid that anchors the lipopolysaccharide to the outer membrane of the cell. In Tolumonas auensis (strain DSM 9187 / NBRC 110442 / TA 4), this protein is UDP-2,3-diacylglucosamine hydrolase.